The sequence spans 203 residues: A-type ATP synthase subunit E (203 aa).

Belongs to the V-ATPase E subunit family. In terms of assembly, has multiple subunits with at least A(3), B(3), C, D, E, F, H, I and proteolipid K(x).

Its subcellular location is the cell membrane. Its function is as follows. Component of the A-type ATP synthase that produces ATP from ADP in the presence of a proton gradient across the membrane. This Thermococcus onnurineus (strain NA1) protein is A-type ATP synthase subunit E.